A 308-amino-acid chain; its full sequence is Porphobilinogen deaminase (308 aa).

Cysteine 240 is subject to S-(dipyrrolylmethanemethyl)cysteine.

Belongs to the HMBS family. Monomer. The cofactor is dipyrromethane.

The enzyme catalyses 4 porphobilinogen + H2O = hydroxymethylbilane + 4 NH4(+). Its pathway is porphyrin-containing compound metabolism; protoporphyrin-IX biosynthesis; coproporphyrinogen-III from 5-aminolevulinate: step 2/4. Functionally, tetrapolymerization of the monopyrrole PBG into the hydroxymethylbilane pre-uroporphyrinogen in several discrete steps. In Desulfitobacterium hafniense (strain DSM 10664 / DCB-2), this protein is Porphobilinogen deaminase.